Reading from the N-terminus, the 344-residue chain is KRR1 small subunit processome component homolog (344 aa).

Residues 126 to 194 (DIIKIGNLVH…VRDIVLDTMN (69 aa)) form the KH domain. The segment covering 230 to 246 (KNKNISKRKQPKNKKPK) has biased composition (basic residues). The tract at residues 230–326 (KNKNISKRKQ…KRAAEDNKVD (97 aa)) is disordered. The stretch at 271–344 (FLNKEQKQAK…MKANKKKERS (74 aa)) forms a coiled coil. A compositionally biased stretch (basic and acidic residues) spans 272 to 303 (LNKEQKQAKRQQERTAKQAEAAKKQDERRNKD).

It belongs to the KRR1 family. In terms of assembly, monomer. Component of the ribosomal small subunit (SSU) processome.

It localises to the nucleus. The protein localises to the nucleolus. Functionally, required for 40S ribosome biogenesis. Involved in nucleolar processing of pre-18S ribosomal RNA and ribosome assembly. Binds to RNA. Required for female germline development, cell viability during eye development and for survival of dividing cells and epithelial cells during early wing disk development. The protein is KRR1 small subunit processome component homolog of Drosophila mojavensis (Fruit fly).